Consider the following 260-residue polypeptide: Spectinomycin 9-adenylyltransferase (260 aa).

The catalysed reaction is spectinomycin + ATP = 9-O-adenylylspectinomycin + diphosphate. Its function is as follows. Mediates bacterial resistance to the antibiotic spectinomycin but not streptomycin. The chain is Spectinomycin 9-adenylyltransferase (ant1) from Staphylococcus aureus (strain Mu50 / ATCC 700699).